Reading from the N-terminus, the 465-residue chain is Glutamate--tRNA ligase (465 aa).

Residues 10–20 carry the 'HIGH' region motif; sequence PSPTGQLHIGG. Zn(2+) contacts are provided by Cys99, Cys101, Cys126, and Glu128. The 'KMSKS' region signature appears at 236–240; the sequence is KLSKR. Lys239 serves as a coordination point for ATP.

It belongs to the class-I aminoacyl-tRNA synthetase family. Glutamate--tRNA ligase type 1 subfamily. In terms of assembly, monomer. Zn(2+) serves as cofactor.

It localises to the cytoplasm. It carries out the reaction tRNA(Glu) + L-glutamate + ATP = L-glutamyl-tRNA(Glu) + AMP + diphosphate. Catalyzes the attachment of glutamate to tRNA(Glu) in a two-step reaction: glutamate is first activated by ATP to form Glu-AMP and then transferred to the acceptor end of tRNA(Glu). The chain is Glutamate--tRNA ligase from Lawsonia intracellularis (strain PHE/MN1-00).